A 150-amino-acid chain; its full sequence is 3-hydroxyacyl-[acyl-carrier-protein] dehydratase FabZ (150 aa).

Residue His51 is part of the active site.

Belongs to the thioester dehydratase family. FabZ subfamily.

The protein resides in the cytoplasm. It carries out the reaction a (3R)-hydroxyacyl-[ACP] = a (2E)-enoyl-[ACP] + H2O. Its function is as follows. Involved in unsaturated fatty acids biosynthesis. Catalyzes the dehydration of short chain beta-hydroxyacyl-ACPs and long chain saturated and unsaturated beta-hydroxyacyl-ACPs. In Geobacter metallireducens (strain ATCC 53774 / DSM 7210 / GS-15), this protein is 3-hydroxyacyl-[acyl-carrier-protein] dehydratase FabZ.